A 329-amino-acid polypeptide reads, in one-letter code: Neuropeptides B/W receptor type 1 (329 aa).

At 1–43 (MHNLTLFESGGDNVSCGGSSLGCPNGSSLAPLPLPQPLAVAVP) the chain is on the extracellular side. Residues Asn3, Asn13, and Asn25 are each glycosylated (N-linked (GlcNAc...) asparagine). The helical transmembrane segment at 44–64 (VVYGVICAVGLAGNSAVLYVL) threads the bilayer. The Cytoplasmic portion of the chain corresponds to 65–75 (LRTPRMKTVTN). A helical membrane pass occupies residues 76-96 (VFILNLAIADELFTLVLPINI). At 97 to 112 (ADFLLRRWPFGEVMCK) the chain is on the extracellular side. The cysteines at positions 111 and 190 are disulfide-linked. Residues 113–133 (LIVAVDQYNTFSSLYFLAVMS) traverse the membrane as a helical segment. Topologically, residues 134 to 158 (ADRYLVVLATAESRRVSGRTYGAAR) are cytoplasmic. A helical membrane pass occupies residues 159–179 (AVSLAVWALVTLVVLPFAVFA). Over 180-209 (RLDEEQGRRQCVLVFPQPEAFWWRASRLYT) the chain is Extracellular. A helical membrane pass occupies residues 210–230 (LVLGFAIPVTTICALYTTLLC). The Cytoplasmic portion of the chain corresponds to 231–250 (RLRAIQLDSHAKALDRAKKR). The chain crosses the membrane as a helical span at residues 251–271 (VTLLVAAILAVCLLCWTPYHL). At 272–289 (STIVALTTDLPQTPLVIG) the chain is on the extracellular side. A helical membrane pass occupies residues 290 to 312 (ISYFITSLSYANSCLNPFLYAFL). Residues 313–329 (DDSFRRSLRQLVSCRSA) are Cytoplasmic-facing.

This sequence belongs to the G-protein coupled receptor 1 family.

The protein resides in the cell membrane. Functionally, interacts specifically with a number of opioid ligands. Receptor for neuropeptides B and W, which may be involved in neuroendocrine system regulation, food intake and the organization of other signals. This Mus musculus (Mouse) protein is Neuropeptides B/W receptor type 1 (Npbwr1).